The following is a 49-amino-acid chain: Large ribosomal subunit protein bL33A (49 aa).

It belongs to the bacterial ribosomal protein bL33 family.

The chain is Large ribosomal subunit protein bL33A from Geobacillus kaustophilus (strain HTA426).